The primary structure comprises 190 residues: Potassium-transporting ATPase KdpC subunit (190 aa).

Residues 13-33 (VGFLLLTLVCGVIYPGVVTII) form a helical membrane-spanning segment.

This sequence belongs to the KdpC family. In terms of assembly, the system is composed of three essential subunits: KdpA, KdpB and KdpC.

The protein localises to the cell membrane. Its function is as follows. Part of the high-affinity ATP-driven potassium transport (or Kdp) system, which catalyzes the hydrolysis of ATP coupled with the electrogenic transport of potassium into the cytoplasm. This subunit acts as a catalytic chaperone that increases the ATP-binding affinity of the ATP-hydrolyzing subunit KdpB by the formation of a transient KdpB/KdpC/ATP ternary complex. The protein is Potassium-transporting ATPase KdpC subunit of Listeria innocua serovar 6a (strain ATCC BAA-680 / CLIP 11262).